A 211-amino-acid polypeptide reads, in one-letter code: Transcriptional regulatory protein RcsA (211 aa).

Residues 135–200 (SEVHPFTLSQ…VIYHVVRLTD (66 aa)) form the HTH luxR-type domain. Positions 159 to 178 (TIQISDKMQIKAKTVSSHKG) form a DNA-binding region, H-T-H motif.

Belongs to the RcsA family.

Its function is as follows. Component of the Rcs signaling system, which controls transcription of numerous genes. Binds to DNA to regulate expression of genes. The chain is Transcriptional regulatory protein RcsA from Erwinia amylovora (Fire blight bacteria).